Reading from the N-terminus, the 130-residue chain is MAKVPSRSPRKRVRKQVADGMAHIHASFNNTIITITDRQGNALSWATSGGSGFRGSRKSTPFAAQVAAERAGVAAQDYGVKNLEVFVKGPGPGRESAIRALNSVGYKITNITDVTPIPHNGCRPPKKRRV.

This sequence belongs to the universal ribosomal protein uS11 family. In terms of assembly, part of the 30S ribosomal subunit. Interacts with proteins S7 and S18. Binds to IF-3.

Located on the platform of the 30S subunit, it bridges several disparate RNA helices of the 16S rRNA. Forms part of the Shine-Dalgarno cleft in the 70S ribosome. This Shewanella sediminis (strain HAW-EB3) protein is Small ribosomal subunit protein uS11.